Here is a 296-residue protein sequence, read N- to C-terminus: uncharacterized protein (296 aa).

6 helical membrane passes run 1-21, 30-50, 71-91, 92-112, 113-133, and 142-162; these read MVNLLFLFFIMSFFPNNIFDY, LITASLKILFALAILLIGFWL, FISFAGNISYYLLLVVFFVLC, LAQLGIQTSSLVALLGASTLA, IGLALQGSLANVAGGILLVLF, and IEVAGIEGIVESIEILSTTIC.

It belongs to the MscS (TC 1.A.23) family.

The protein resides in the cell membrane. This is an uncharacterized protein from Synechocystis sp. (strain ATCC 27184 / PCC 6803 / Kazusa).